A 331-amino-acid chain; its full sequence is tRNA N6-adenosine threonylcarbamoyltransferase (331 aa).

Residues His-109, His-113, and Tyr-130 each contribute to the Fe cation site. Residues Tyr-130–Gly-134, Asp-162, Asp-183, and Ser-262 each bind substrate. Residue Asp-290 coordinates Fe cation.

This sequence belongs to the KAE1 / TsaD family. Fe(2+) serves as cofactor.

It localises to the cytoplasm. It carries out the reaction L-threonylcarbamoyladenylate + adenosine(37) in tRNA = N(6)-L-threonylcarbamoyladenosine(37) in tRNA + AMP + H(+). Its function is as follows. Required for the formation of a threonylcarbamoyl group on adenosine at position 37 (t(6)A37) in tRNAs that read codons beginning with adenine. Is probably involved in the transfer of the threonylcarbamoyl moiety of threonylcarbamoyl-AMP (TC-AMP) to the N6 group of A37. The sequence is that of tRNA N6-adenosine threonylcarbamoyltransferase from Saccharolobus islandicus (strain M.16.27) (Sulfolobus islandicus).